A 734-amino-acid chain; its full sequence is Cullin-4 (734 aa).

The 63-residue stretch at 666–728 (DRQFELQASI…KEYLEREDND (63 aa)) folds into the Cullin neddylation domain. Lysine 680 participates in a covalent cross-link: Glycyl lysine isopeptide (Lys-Gly) (interchain with G-Cter in NEDD8).

It belongs to the cullin family. Component of the Clr4 methyltransferase complex (ClrC) composed of at least clr4, rik1, pcu4, rbx1, raf1 and raf2. The cullin pcu4, rik1, raf1, raf2 and the ring-box protein rbx1 are components of an E3 ubiquitin ligase, whose activity is essential for heterochromatin assembly. In terms of processing, neddylated; enhancing the ubiquitin-ligase activity.

The protein resides in the cytoplasm. It is found in the nucleus. Its subcellular location is the chromosome. It participates in protein modification; protein ubiquitination. Functionally, required, indirectly, for activation of ribonucleotide reductase through the degradation of the protein spd1, thereby supplying deoxyribonucleotides for DNA replication and repair. Also has a role as a scaffold for assembling ubiquitin ligases. Component of the Clr4 methyltransferase complex (ClrC) which contributes to the establishment of heterochromatin by specifically methylating histone H3 to form H3K9me. ClrC preferentially ubiquitylates H3K14 and ClrC-mediated H3 ubiquitination promotes clr4 methyltransferase activity for the methylation of H3K9. H3K9me represents a specific tag for epigenetic transcriptional repression by recruiting swi6/HP1 to methylated histones which leads to transcriptional silencing within centromeric heterochromatin, telomeric regions and at the silent mating-type loci. In Schizosaccharomyces pombe (strain 972 / ATCC 24843) (Fission yeast), this protein is Cullin-4 (pcu4).